We begin with the raw amino-acid sequence, 1203 residues long: Partitioning defective 3 homolog B (1203 aa).

2 disordered regions span residues 79–104 and 138–162; these read FDEQ…PDAF and RRSS…SGQS. Serine 100 bears the Phosphoserine mark. The segment covering 152–162 has biased composition (polar residues); sequence QPSTASLSGQS. Positions 201–289 constitute a PDZ 1 domain; sequence TRAVEISGEG…SPSVILHVLL (89 aa). Positions 334-374 are disordered; the sequence is TRASSPEGEEPASPQQSKSPRVPRLGRKPSSPSLSPLMGFG. Phosphoserine is present on residues serine 346, serine 352, and serine 368. PDZ domains lie at 383–468 and 496–585; these read KIDL…VIAR and TLEI…GMIQ. 7 positions are modified to phosphoserine: serine 635, serine 710, serine 728, serine 730, serine 746, serine 749, and serine 801. Residues 718 to 732 are compositionally biased toward basic and acidic residues; sequence GKVQSLADRRSDSPG. Residues 718–743 form a disordered region; that stretch reads GKVQSLADRRSDSPGKDFGPTLGLKK. Disordered regions lie at residues 787–927, 968–994, and 1050–1203; these read KSYD…EKQA, VFRS…PDHL, and RPSD…TAAV. Threonine 810 is modified (phosphothreonine). Basic and acidic residues predominate over residues 827-842; sequence VENKAKNIKKTKEKEK. The span at 843–854 shows a compositional bias: basic residues; that stretch reads KKGKGKLKVKEK. Composition is skewed to basic and acidic residues over residues 855–865, 881–893, 906–927, and 984–994; these read KLKEEHEDAER, KKDD…EQKG, ERMK…EKQA, and RDGRPLSPDHL. Residues serine 1088 and serine 1182 each carry the phosphoserine modification.

Belongs to the PAR3 family. In terms of assembly, interacts with PARD6B. Interacts with INSC/inscuteable.

It is found in the endomembrane system. The protein resides in the cell junction. Its subcellular location is the tight junction. In terms of biological role, putative adapter protein involved in asymmetrical cell division and cell polarization processes. May play a role in the formation of epithelial tight junctions. The chain is Partitioning defective 3 homolog B (Pard3b) from Mus musculus (Mouse).